We begin with the raw amino-acid sequence, 371 residues long: 4-hydroxy-3-methylbut-2-en-1-yl diphosphate synthase (flavodoxin) (371 aa).

[4Fe-4S] cluster-binding residues include cysteine 269, cysteine 272, cysteine 304, and glutamate 311.

Belongs to the IspG family. It depends on [4Fe-4S] cluster as a cofactor.

It catalyses the reaction (2E)-4-hydroxy-3-methylbut-2-enyl diphosphate + oxidized [flavodoxin] + H2O + 2 H(+) = 2-C-methyl-D-erythritol 2,4-cyclic diphosphate + reduced [flavodoxin]. It functions in the pathway isoprenoid biosynthesis; isopentenyl diphosphate biosynthesis via DXP pathway; isopentenyl diphosphate from 1-deoxy-D-xylulose 5-phosphate: step 5/6. Functionally, converts 2C-methyl-D-erythritol 2,4-cyclodiphosphate (ME-2,4cPP) into 1-hydroxy-2-methyl-2-(E)-butenyl 4-diphosphate. The sequence is that of 4-hydroxy-3-methylbut-2-en-1-yl diphosphate synthase (flavodoxin) from Acinetobacter baylyi (strain ATCC 33305 / BD413 / ADP1).